We begin with the raw amino-acid sequence, 577 residues long: Probable ATP-dependent RNA helicase DDX55 homolog (577 aa).

The Q motif signature appears at 7 to 37 (AVATKTYREKLGPEILEVFDKSYKSFTDVQV). Positions 40–218 (GTHLLNLSDV…VFGLRNAKQV (179 aa)) constitute a Helicase ATP-binding domain. 53–60 (SPTGSGKT) lines the ATP pocket. The DEAD box motif lies at 166–169 (DEAD). The region spanning 231-393 (TLKNYFVECP…EVKVPTSTSR (163 aa)) is the Helicase C-terminal domain. The tract at residues 508–577 (AKEKKRREKE…LSKKEIKDVL (70 aa)) is disordered. Residues 510-530 (EKKRREKEARKMKRAGGRFKS) are compositionally biased toward basic residues.

It belongs to the DEAD box helicase family. DDX55/SPB4 subfamily.

It catalyses the reaction ATP + H2O = ADP + phosphate + H(+). Probable ATP-binding RNA helicase. This Caenorhabditis briggsae protein is Probable ATP-dependent RNA helicase DDX55 homolog.